The chain runs to 192 residues: Imidazoleglycerol-phosphate dehydratase (192 aa).

Belongs to the imidazoleglycerol-phosphate dehydratase family.

The protein resides in the cytoplasm. The catalysed reaction is D-erythro-1-(imidazol-4-yl)glycerol 3-phosphate = 3-(imidazol-4-yl)-2-oxopropyl phosphate + H2O. Its pathway is amino-acid biosynthesis; L-histidine biosynthesis; L-histidine from 5-phospho-alpha-D-ribose 1-diphosphate: step 6/9. The polypeptide is Imidazoleglycerol-phosphate dehydratase (Staphylococcus epidermidis (strain ATCC 35984 / DSM 28319 / BCRC 17069 / CCUG 31568 / BM 3577 / RP62A)).